The following is a 119-amino-acid chain: uncharacterized protein (119 aa).

Positions 55 to 119 (LSTEPPTPPS…SRLPPRSWTN (65 aa)) are disordered. A compositionally biased stretch (polar residues) spans 81–92 (LSYTRCHSTTYT).

This is an uncharacterized protein from Saccharomyces cerevisiae (strain ATCC 204508 / S288c) (Baker's yeast).